The chain runs to 166 residues: Regulatory protein RecX (166 aa).

The protein belongs to the RecX family.

Its subcellular location is the cytoplasm. Its function is as follows. Modulates RecA activity. This is Regulatory protein RecX from Salmonella paratyphi A (strain ATCC 9150 / SARB42).